We begin with the raw amino-acid sequence, 360 residues long: Dynein intermediate light chain dil1 (360 aa).

Belongs to the dynein light intermediate chain DYN3 family. As to quaternary structure, the dynein complex consists of at least two heavy chains and a number of intermediate and light chains. Interacts with rga3, sec10, sec16, syp1, rvb2, spbc19c7.04c, spbc2f12.05 and spac3a11.10c. The N-terminal part is acetylated.

The protein resides in the cytoplasm. The protein localises to the cytoskeleton. In terms of biological role, component of the cytoplasmic dynein which acts as a motor for the intracellular retrograde motility of vesicles and organelles along microtubules. Promotes oscillatory nuclear movement and efficient pairing of homologous centromeres during meiotic prophase. The protein is Dynein intermediate light chain dil1 (dil1) of Schizosaccharomyces pombe (strain 972 / ATCC 24843) (Fission yeast).